Here is a 145-residue protein sequence, read N- to C-terminus: Superoxide dismutase [Mn/Fe] (145 aa).

Positions 10 and 64 each coordinate Fe(3+). The Mn(2+) site is built by H10 and H64. A disordered region spans residues 126–145 (TSTANQDTPISEGKKPILGL).

This sequence belongs to the iron/manganese superoxide dismutase family. Requires Mn(2+) as cofactor. The cofactor is Fe(3+).

The enzyme catalyses 2 superoxide + 2 H(+) = H2O2 + O2. Functionally, destroys superoxide anion radicals which are normally produced within the cells and which are toxic to biological systems. Catalyzes the dismutation of superoxide anion radicals into O2 and H2O2 by successive reduction and oxidation of the transition metal ion at the active site. The chain is Superoxide dismutase [Mn/Fe] (sodA) from Streptococcus mitis.